Reading from the N-terminus, the 231-residue chain is Small ribosomal subunit protein uS3 (231 aa).

The region spanning 39–107 (VREFLKEKLK…PAQINIAEVR (69 aa)) is the KH type-2 domain.

This sequence belongs to the universal ribosomal protein uS3 family. In terms of assembly, part of the 30S ribosomal subunit. Forms a tight complex with proteins S10 and S14.

Its function is as follows. Binds the lower part of the 30S subunit head. Binds mRNA in the 70S ribosome, positioning it for translation. This chain is Small ribosomal subunit protein uS3, found in Colwellia psychrerythraea (strain 34H / ATCC BAA-681) (Vibrio psychroerythus).